The following is a 241-amino-acid chain: Octanoyltransferase (241 aa).

In terms of domain architecture, BPL/LPL catalytic spans 50–238 (KIAHEQVWLL…AFEQIFGPTI (189 aa)). Residues 89-96 (RGGEFTYH), 169-171 (AIG), and 182-184 (GIS) contribute to the substrate site. The Acyl-thioester intermediate role is filled by Cys-200.

This sequence belongs to the LipB family.

The protein resides in the cytoplasm. The catalysed reaction is octanoyl-[ACP] + L-lysyl-[protein] = N(6)-octanoyl-L-lysyl-[protein] + holo-[ACP] + H(+). It participates in protein modification; protein lipoylation via endogenous pathway; protein N(6)-(lipoyl)lysine from octanoyl-[acyl-carrier-protein]: step 1/2. In terms of biological role, catalyzes the transfer of endogenously produced octanoic acid from octanoyl-acyl-carrier-protein onto the lipoyl domains of lipoate-dependent enzymes. Lipoyl-ACP can also act as a substrate although octanoyl-ACP is likely to be the physiological substrate. This is Octanoyltransferase from Bartonella bacilliformis (strain ATCC 35685 / KC583 / Herrer 020/F12,63).